We begin with the raw amino-acid sequence, 209 residues long: 2-phospho-L-lactate guanylyltransferase (209 aa).

This sequence belongs to the CofC family. In terms of assembly, homodimer.

It carries out the reaction (2S)-2-phospholactate + GTP + H(+) = (2S)-lactyl-2-diphospho-5'-guanosine + diphosphate. The protein operates within cofactor biosynthesis; coenzyme F420 biosynthesis. Its function is as follows. Guanylyltransferase that catalyzes the activation of (2S)-2-phospholactate (2-PL) as (2S)-lactyl-2-diphospho-5'-guanosine, via the condensation of 2-PL with GTP. It is involved in the biosynthesis of coenzyme F420, a hydride carrier cofactor. This chain is 2-phospho-L-lactate guanylyltransferase, found in Halobacterium salinarum (strain ATCC 29341 / DSM 671 / R1).